The primary structure comprises 601 residues: NAD-dependent malic enzyme 59 kDa isoform, mitochondrial (601 aa).

A mitochondrion-targeting transit peptide spans 1–18 (MWRVARSAASTFRRTRRL). The active-site Proton donor is the Tyr129. Residue Arg182 participates in NAD(+) binding. Lys200 serves as the catalytic Proton acceptor. Residues Glu271, Asp272, and Asp295 each contribute to the a divalent metal cation site. NAD(+) contacts are provided by Asp295 and Asn444.

This sequence belongs to the malic enzymes family. As to quaternary structure, heterodimer of two related subunits. The cofactor is Mg(2+). Mn(2+) is required as a cofactor.

It is found in the mitochondrion matrix. It catalyses the reaction (S)-malate + NAD(+) = pyruvate + CO2 + NADH. The chain is NAD-dependent malic enzyme 59 kDa isoform, mitochondrial from Solanum tuberosum (Potato).